The chain runs to 304 residues: Acetylglutamate kinase (304 aa).

Residues 75-76 (GG), arginine 97, and asparagine 196 each bind substrate.

It belongs to the acetylglutamate kinase family. ArgB subfamily.

It localises to the cytoplasm. It carries out the reaction N-acetyl-L-glutamate + ATP = N-acetyl-L-glutamyl 5-phosphate + ADP. It functions in the pathway amino-acid biosynthesis; L-arginine biosynthesis; N(2)-acetyl-L-ornithine from L-glutamate: step 2/4. In terms of biological role, catalyzes the ATP-dependent phosphorylation of N-acetyl-L-glutamate. In Corynebacterium urealyticum (strain ATCC 43042 / DSM 7109), this protein is Acetylglutamate kinase.